Consider the following 718-residue polypeptide: Telomeric repeat-binding factor 2 (718 aa).

Disordered stretches follow at residues 1-22 (MAAKRSRAAMEEQEKTSTRSDD) and 219-286 (NSER…GAPE). Basic and acidic residues-rich tracts occupy residues 8-22 (AAMEEQEKTSTRSDD) and 219-228 (NSERAEEPKR). The TRFH dimerization stretch occupies residues 24–220 (EQAVNRWVLQ…LVTMMKSLNS (197 aa)). Repeat copies occupy residues 257–269 (GTLRRAETAGGVA), 270–282 (GAPSCPEMAKDPT), 283–295 (GAPEHVGTVKDAV), 296–308 (RAPCPAESTEDSQ), 309–321 (GTPRCAETARDVM), 322–334 (GAPSPSEMTKDLL), 335–347 (GAPKCTETARDVV), 348–360 (RAPSPAESTKDPV), 361–373 (GTPGHAETARDVA), 374–386 (RAPSPAETTKNLP), 387–399 (GAPECADTVKNTV), 400–412 (RAPSPAERRKDLV), 413–425 (RAPKRAETARDVV), 426–438 (RAPSPAERVKDTA), and 439–451 (GASEPMKSASYPT). The segment at 257–451 (GTLRRAETAG…EPMKSASYPT (195 aa)) is 15 X 13 AA approximate tandem repeats. Disordered regions lie at residues 342–455 (TARD…ASQP) and 524–641 (FNKL…WSDE). Over residues 405-425 (AERRKDLVRAPKRAETARDVV) the composition is skewed to basic and acidic residues. Residues 533-543 (PSPQQMSPSVS) are compositionally biased toward polar residues. Residues 545–550 (RTKRRK) carry the Nuclear localization signal motif. The segment covering 584–595 (SQCSKSSESPDS) has biased composition (low complexity). Residues 615-630 (PVSTKRSSQQRWNSSY) are compositionally biased toward polar residues. One can recognise an HTH myb-type domain in the interval 664 to 717 (KKQKWTVQESEWIKDGVRKYGEGRWKTISEKYPFQNRTSVQIKDRYRTMKKLGI). Residues 688–713 (WKTISEKYPFQNRTSVQIKDRYRTMK) constitute a DNA-binding region (H-T-H motif).

As to quaternary structure, homodimer. Component of the shelterin complex (telosome). Interacts with TERF2IP/RAP1. In terms of tissue distribution, highly expressed in embryo.

It localises to the nucleus. Its subcellular location is the chromosome. The protein resides in the telomere. Binds the telomeric double-stranded 5'-TTAGGG-3' repeat and plays a central role in telomere maintenance and protection against end-to-end fusion of chromosomes. In addition to its telomeric DNA-binding role, required to recruit a number of factors and enzymes required for telomere protection, including the shelterin complex, TERF2IP/RAP1 and DCLRE1B/Apollo. Component of the shelterin complex (telosome) that is involved in the regulation of telomere length and protection. Shelterin associates with arrays of double-stranded 5'-TTAGGG-3' repeats added by telomerase and protects chromosome ends; without its protective activity, telomeres are no longer hidden from the DNA damage surveillance and chromosome ends are inappropriately processed by DNA repair pathways. Together with DCLRE1B/Apollo, plays a key role in telomeric loop (T loop) formation by generating 3' single-stranded overhang at the leading end telomeres: T loops have been proposed to protect chromosome ends from degradation and repair. Required both to recruit DCLRE1B/Apollo to telomeres and activate the exonuclease activity of DCLRE1B/Apollo. Together with DCLRE1B/Apollo, required to control the amount of DNA topoisomerase (TOP1, TOP2A and TOP2B) needed for telomere replication during fork passage and prevent aberrant telomere topology. Recruits TERF2IP/RAP1 to telomeres, thereby participating in to repressing homology-directed repair (HDR), which can affect telomere length. The polypeptide is Telomeric repeat-binding factor 2 (TERF2) (Gallus gallus (Chicken)).